The chain runs to 555 residues: Methyl-coenzyme M reductase subunit alpha (555 aa).

Q152 provides a ligand contact to coenzyme F430. Residues R230, 261-262 (KH), and R275 each bind coenzyme B. Residues Y337 and Y448 each contribute to the coenzyme M site.

The protein belongs to the methyl-coenzyme M reductase alpha subunit family. As to quaternary structure, MCR is a hexamer of two alpha, two beta, and two gamma chains, forming a dimer of heterotrimers. Requires coenzyme F430 as cofactor.

Its subcellular location is the cytoplasm. It carries out the reaction coenzyme B + methyl-coenzyme M = methane + coenzyme M-coenzyme B heterodisulfide. It participates in one-carbon metabolism; methyl-coenzyme M reduction; methane from methyl-coenzyme M: step 1/1. Its function is as follows. Component of the methyl-coenzyme M reductase (MCR) I that catalyzes the reductive cleavage of methyl-coenzyme M (CoM-S-CH3 or 2-(methylthio)ethanesulfonate) using coenzyme B (CoB or 7-mercaptoheptanoylthreonine phosphate) as reductant which results in the production of methane and the mixed heterodisulfide of CoB and CoM (CoM-S-S-CoB). This is the final step in methanogenesis. This Methanococcus voltae protein is Methyl-coenzyme M reductase subunit alpha (mcrA).